The following is a 199-amino-acid chain: Holliday junction branch migration complex subunit RuvA (199 aa).

The domain I stretch occupies residues 1–63 (MIASVRGEVL…EDSMTLYGFT (63 aa)). The interval 64-142 (DAETRDLFLT…AAGAAGAPAG (79 aa)) is domain II. The interval 143–153 (AARNGHAVRGP) is flexible linker. Positions 153–199 (PVVEALVGLGFAAKQAEEATDKVLAAEPEAGTSGALRAALSLLGKSR) are domain III.

This sequence belongs to the RuvA family. Homotetramer. Forms an RuvA(8)-RuvB(12)-Holliday junction (HJ) complex. HJ DNA is sandwiched between 2 RuvA tetramers; dsDNA enters through RuvA and exits via RuvB. An RuvB hexamer assembles on each DNA strand where it exits the tetramer. Each RuvB hexamer is contacted by two RuvA subunits (via domain III) on 2 adjacent RuvB subunits; this complex drives branch migration. In the full resolvosome a probable DNA-RuvA(4)-RuvB(12)-RuvC(2) complex forms which resolves the HJ.

Its subcellular location is the cytoplasm. Functionally, the RuvA-RuvB-RuvC complex processes Holliday junction (HJ) DNA during genetic recombination and DNA repair, while the RuvA-RuvB complex plays an important role in the rescue of blocked DNA replication forks via replication fork reversal (RFR). RuvA specifically binds to HJ cruciform DNA, conferring on it an open structure. The RuvB hexamer acts as an ATP-dependent pump, pulling dsDNA into and through the RuvAB complex. HJ branch migration allows RuvC to scan DNA until it finds its consensus sequence, where it cleaves and resolves the cruciform DNA. This chain is Holliday junction branch migration complex subunit RuvA, found in Mycobacterium avium (strain 104).